A 203-amino-acid polypeptide reads, in one-letter code: Thymidylate kinase (203 aa).

14 to 21 (GGEGIGKS) is a binding site for ATP.

It belongs to the thymidylate kinase family.

It catalyses the reaction dTMP + ATP = dTDP + ADP. Phosphorylation of dTMP to form dTDP in both de novo and salvage pathways of dTTP synthesis. The chain is Thymidylate kinase from Rickettsia conorii (strain ATCC VR-613 / Malish 7).